Reading from the N-terminus, the 325-residue chain is Beta-ketoacyl-[acyl-carrier-protein] synthase III 2 (325 aa).

Catalysis depends on residues cysteine 113 and histidine 250. The interval 251–255 is ACP-binding; it reads SANLR. Asparagine 280 is an active-site residue.

This sequence belongs to the thiolase-like superfamily. FabH family. Homodimer.

It localises to the cytoplasm. It carries out the reaction 3-methylbutanoyl-CoA + malonyl-[ACP] + H(+) = 5-methyl-3-oxohexanoyl-[ACP] + CO2 + CoA. It catalyses the reaction 2-methylpropanoyl-CoA + malonyl-[ACP] + H(+) = 4-methyl-3-oxopentanoyl-[ACP] + CO2 + CoA. The catalysed reaction is (2S)-2-methylbutanoyl-CoA + malonyl-[ACP] + H(+) = (4S)-4-methyl-3-oxohexanoyl-[ACP] + CO2 + CoA. The enzyme catalyses malonyl-[ACP] + acetyl-CoA + H(+) = 3-oxobutanoyl-[ACP] + CO2 + CoA. It carries out the reaction malonyl-[ACP] + propanoyl-CoA + H(+) = 3-oxopentanoyl-[ACP] + CO2 + CoA. It catalyses the reaction butanoyl-CoA + malonyl-[ACP] + H(+) = 3-oxohexanoyl-[ACP] + CO2 + CoA. The catalysed reaction is pentanoyl-CoA + malonyl-[ACP] + H(+) = 3-oxoheptanoyl-[ACP] + CO2 + CoA. The enzyme catalyses hexanoyl-CoA + malonyl-[ACP] + H(+) = 3-oxooctanoyl-[ACP] + CO2 + CoA. It carries out the reaction heptanoyl-CoA + malonyl-[ACP] + H(+) = 3-oxononanoyl-[ACP] + CO2 + CoA. It functions in the pathway lipid metabolism; fatty acid biosynthesis. Catalyzes the condensation reaction of fatty acid synthesis by the addition to an acyl acceptor of two carbons from malonyl-ACP. Catalyzes the first condensation reaction which initiates fatty acid synthesis and may therefore play a role in governing the total rate of fatty acid production. Possesses both acetoacetyl-ACP synthase and acetyl transacylase activities. Has some substrate specificity for branched chain acyl-CoA, determining the biosynthesis of branched-chain of fatty acids instead of straight-chain. In Bacillus subtilis (strain 168), this protein is Beta-ketoacyl-[acyl-carrier-protein] synthase III 2.